The sequence spans 617 residues: Zinc finger protein 221 (617 aa).

A KRAB domain is found at 30-100 (VTFKDVAVVF…KTTSQREGNS (71 aa)). 3 C2H2-type zinc fingers span residues 170 to 192 (YRCN…QQSH), 198 to 220 (HTCG…QRVH), and 226 to 248 (YKCD…QRVH). The segment at 254 to 276 (FKCGQCGKGFHSRSALNVHCKLH) adopts a C2H2-type 4; degenerate zinc-finger fold. 11 C2H2-type zinc fingers span residues 282–304 (YNCE…QRIH), 310–332 (FKCD…SMVH), 338–360 (FRCD…SMVH), 366–388 (YKCE…QMVH), 394–416 (YNCK…QQVH), 422–444 (FKCE…QRSH), 450–472 (YNCE…QRVH), 478–500 (YNCK…QRLH), 506–528 (FKCE…QTCH), 534–556 (YKCE…QRVH), and 562–584 (YNCK…QRLH).

This sequence belongs to the krueppel C2H2-type zinc-finger protein family.

Its subcellular location is the nucleus. May be involved in transcriptional regulation. The protein is Zinc finger protein 221 (ZNF221) of Homo sapiens (Human).